A 244-amino-acid chain; its full sequence is MGDLFSLFWEVDPPPIPVNCAIPNQDYECWKDDSCGTIGSFLLWYFVIVFVLMFFSRASVWMSEDKKDEGSGTSTSVRKASKETSCKRQSKDSAWDPSQTMKKPKQNQLTPVTNSEVALVNAYPEQRRARRQSQFNEVNQNQHDSDTTEYGSEESNSEASSWKESESEHHPSPDSIKRRKMAQRQRNLGSYQMSERHCLHCKALRTNEWLAHHSRQKPSVTPPMKRDSQEESSISDINKKFSKF.

A helical membrane pass occupies residues 35–55 (CGTIGSFLLWYFVIVFVLMFF). Disordered stretches follow at residues 65 to 114 (DKKD…PVTN), 126 to 191 (QRRA…LGSY), and 210 to 244 (LAHHSRQKPSVTPPMKRDSQEESSISDINKKFSKF). A compositionally biased stretch (basic and acidic residues) spans 80-94 (ASKETSCKRQSKDSA). Composition is skewed to polar residues over residues 96-114 (DPSQTMKKPKQNQLTPVTN) and 132-142 (QSQFNEVNQNQ). Residues 161-176 (SWKESESEHHPSPDSI) are compositionally biased toward basic and acidic residues.

It is found in the membrane. This chain is Serine-rich single-pass membrane protein 1 (SSMEM1), found in Homo sapiens (Human).